Consider the following 93-residue polypeptide: Acyl carrier protein AcpXL (93 aa).

The region spanning 2–88 (STTFDKVAKI…NLCAKIDALV (87 aa)) is the Carrier domain. Serine 37 is modified (O-(pantetheine 4'-phosphoryl)serine).

4'-phosphopantetheine is transferred from CoA to a specific serine of apo-ACP by AcpS. This modification is essential for activity because fatty acids are bound in thioester linkage to the sulfhydryl of the prosthetic group.

It localises to the cytoplasm. It participates in glycolipid biosynthesis; KDO(2)-lipid A biosynthesis. Its function is as follows. Carrier of the growing fatty acid chain in fatty acid biosynthesis. Is involved in the transfer of long hydroxylated fatty acids to lipid A. This Mesorhizobium japonicum (strain LMG 29417 / CECT 9101 / MAFF 303099) (Mesorhizobium loti (strain MAFF 303099)) protein is Acyl carrier protein AcpXL (acpXL).